Consider the following 177-residue polypeptide: ATP synthase subunit delta (177 aa).

The protein belongs to the ATPase delta chain family. In terms of assembly, F-type ATPases have 2 components, F(1) - the catalytic core - and F(0) - the membrane proton channel. F(1) has five subunits: alpha(3), beta(3), gamma(1), delta(1), epsilon(1). F(0) has three main subunits: a(1), b(2) and c(10-14). The alpha and beta chains form an alternating ring which encloses part of the gamma chain. F(1) is attached to F(0) by a central stalk formed by the gamma and epsilon chains, while a peripheral stalk is formed by the delta and b chains.

The protein localises to the cell inner membrane. Its function is as follows. F(1)F(0) ATP synthase produces ATP from ADP in the presence of a proton or sodium gradient. F-type ATPases consist of two structural domains, F(1) containing the extramembraneous catalytic core and F(0) containing the membrane proton channel, linked together by a central stalk and a peripheral stalk. During catalysis, ATP synthesis in the catalytic domain of F(1) is coupled via a rotary mechanism of the central stalk subunits to proton translocation. In terms of biological role, this protein is part of the stalk that links CF(0) to CF(1). It either transmits conformational changes from CF(0) to CF(1) or is implicated in proton conduction. This chain is ATP synthase subunit delta, found in Shewanella loihica (strain ATCC BAA-1088 / PV-4).